The following is an 851-amino-acid chain: MTDWKTTITPEERNGNSIKILDFLMQWYPNFNRAEALVRANTLEDRIFNTPGIISKNDYIERIAKKIYAIGESLEAKKAQAGMTNNPQTPNPMPTTPITPLIQQPITPVQQQVPPQKQPQPVYNQQQNQQQNQNQYTTTYPSPNTPQQSNTPPISNNNSNNNSNNNLNNNNNNNINNNNNNNNNNNNNNNNNNNNNNNNNNNNNNNNNNTVYAQPLTPQQQIQQQQHQQHQLYLQQQQQLQRLAQQNQQQQPTIMQQVQNQQPTQQQQQQQQQQQQQQQQQQLNQQQINQIKQQQQQQQQQQQQHQQPVQMPSGVTTNKQSPQPQNTPLTPQQQQQLLAAQQSHAQAQANQNQQLQNPKRISSTNNTHLMPCLPSTLYPTATQQDINNMYWERVSSIKKYIPEIEAIIPKIIENFSQSQNQQPQKVETYKKKFLDFVQMVKVTPETVVPPLNLDELTNAERYLMNMYLSSLSEEEQFKKILGTIDDRSNDNLIHFEKDLLNAFERTKRYFSDTFLNKTGGVTSKAPSILWFKNPALNNPFTSATKCQFSDPIVPKKKQHILLDSWTPEFKKIKKGNYEIFEKDQKIYNNLKKDLIDFTKNDNTLLPAKFIDKDTIIISETINGGDGGNNLYIHFNQCQFSTSWKGSKKNPAMFVCSSPNIQISSDGELFSIQPLCGLSWDRAEIIIKHYKQSLNRGDLISKELSQVISLNRYTIESHLDLENAKFFIQFSTKSTLLLKSKKQQQQQQDEKINNNNNNFYNLSILLEVPNNYPYSPISYSFPPEYQLTPYLKDLESKMNKEFENSNDLNQLNNNINNNNNNNNSFSDNTQLPTNQSIVESLKIFEKVLKDLV.

2 disordered regions span residues alanine 79–tyrosine 212 and glutamine 299–histidine 368. Positions isoleucine 98 to proline 141 are enriched in low complexity. Residues threonine 145–isoleucine 154 show a composition bias toward polar residues. Over residues serine 155–tyrosine 212 the composition is skewed to low complexity. Residues glutamine 231–glutamine 307 are a coiled coil. Polar residues predominate over residues proline 308–lysine 319. Over residues glutamine 320–proline 358 the composition is skewed to low complexity. Residues lysine 359–histidine 368 show a composition bias toward polar residues. Positions leucine 790–asparagine 827 form a coiled coil.

The protein belongs to the Mediator complex subunit 15 family. As to quaternary structure, component of the Mediator complex.

Its subcellular location is the cytoplasm. The protein resides in the nucleus. In terms of biological role, component of the Mediator complex, a coactivator involved in the regulated transcription of nearly all RNA polymerase II-dependent genes. Mediator functions as a bridge to convey information from gene-specific regulatory proteins to the basal RNA polymerase II transcription machinery. Mediator is recruited to promoters by direct interactions with regulatory proteins and serves as a scaffold for the assembly of a functional preinitiation complex with RNA polymerase II and the general transcription factors. The chain is Putative mediator of RNA polymerase II transcription subunit 15 (med15) from Dictyostelium discoideum (Social amoeba).